Consider the following 563-residue polypeptide: Coiled-coil domain-containing protein 38 (563 aa).

Coiled coils occupy residues 129 to 212, 384 to 415, and 485 to 522; these read KRNT…KTEF, NIEF…RSRL, and ERMK…AVAQ. Residues 521 to 550 form a disordered region; sequence AQPKKKLGRRLVYHSKPPSANKQQLPLVNE. Residues 523 to 533 are compositionally biased toward basic residues; it reads PKKKLGRRLVY.

Interacts with CCDC42, CFAP53, IFT88 and ODF2. Interacts with CCDC146. Interacts with TEKT3. Interacts with ubiquitinated histone H2A.

The protein localises to the cytoplasm. It localises to the cytoskeleton. It is found in the microtubule organizing center. The protein resides in the centrosome. Its subcellular location is the perinuclear region. The protein localises to the cell projection. It localises to the cilium. It is found in the flagellum. In terms of biological role, essential for male fertility. Required for sperm flagellum biogenesis. Also required for acrosome biogenesis. Required for the attachment of developing acrosomes to the nucleus during spermiogenesis and may be involved in the transport of fibrous sheath components. The protein is Coiled-coil domain-containing protein 38 (CCDC38) of Macaca fascicularis (Crab-eating macaque).